The sequence spans 649 residues: WEB family protein At5g55860 (649 aa).

3 coiled-coil regions span residues Glu-59–Gln-227, Glu-267–Val-356, and Thr-391–Lys-461. Residues Glu-443 to Glu-453 show a composition bias toward basic and acidic residues. Positions Glu-443–Glu-483 are disordered. Residues Lys-456–Asn-467 are compositionally biased toward polar residues. Residues Ser-468–Gln-482 are compositionally biased toward low complexity. Residues Ala-505 to Asp-549 are a coiled coil. The disordered stretch occupies residues Met-583–Lys-611.

Belongs to the WEB family.

The protein is WEB family protein At5g55860 of Arabidopsis thaliana (Mouse-ear cress).